The following is a 120-amino-acid chain: GATA transcription factor 23 (120 aa).

Residues 22 to 76 (KGTIRCCSECKTTKTPMWRGGPTGPKSLCNACGIRHRKQRRSELLGIHIIRSHKS) form a GATA-type zinc finger.

It belongs to the type IV zinc-finger family. Class B subfamily.

Its subcellular location is the nucleus. Its function is as follows. Transcriptional regulator that specifically binds 5'-GATA-3' or 5'-GAT-3' motifs within gene promoters. This is GATA transcription factor 23 (GATA23) from Arabidopsis thaliana (Mouse-ear cress).